Consider the following 99-residue polypeptide: Small ribosomal subunit protein eS24 (99 aa).

The protein belongs to the eukaryotic ribosomal protein eS24 family.

This is Small ribosomal subunit protein eS24 (rps2e) from Thermoplasma volcanium (strain ATCC 51530 / DSM 4299 / JCM 9571 / NBRC 15438 / GSS1).